We begin with the raw amino-acid sequence, 365 residues long: S-adenosylmethionine:tRNA ribosyltransferase-isomerase (365 aa).

It belongs to the QueA family. As to quaternary structure, monomer.

The protein resides in the cytoplasm. The catalysed reaction is 7-aminomethyl-7-carbaguanosine(34) in tRNA + S-adenosyl-L-methionine = epoxyqueuosine(34) in tRNA + adenine + L-methionine + 2 H(+). Its pathway is tRNA modification; tRNA-queuosine biosynthesis. In terms of biological role, transfers and isomerizes the ribose moiety from AdoMet to the 7-aminomethyl group of 7-deazaguanine (preQ1-tRNA) to give epoxyqueuosine (oQ-tRNA). The polypeptide is S-adenosylmethionine:tRNA ribosyltransferase-isomerase (Rickettsia conorii (strain ATCC VR-613 / Malish 7)).